Here is a 257-residue protein sequence, read N- to C-terminus: 5'-nucleotidase SurE (257 aa).

4 residues coordinate a divalent metal cation: Asp8, Asp9, Ser40, and Asn97.

It belongs to the SurE nucleotidase family. Requires a divalent metal cation as cofactor.

Its subcellular location is the cytoplasm. It catalyses the reaction a ribonucleoside 5'-phosphate + H2O = a ribonucleoside + phosphate. Nucleotidase that shows phosphatase activity on nucleoside 5'-monophosphates. This Desulforudis audaxviator (strain MP104C) protein is 5'-nucleotidase SurE.